Consider the following 81-residue polypeptide: Keratin-associated protein 19-3 (81 aa).

This sequence belongs to the KRTAP type 19 family. Interacts with hair keratins.

Functionally, in the hair cortex, hair keratin intermediate filaments are embedded in an interfilamentous matrix, consisting of hair keratin-associated proteins (KRTAP), which are essential for the formation of a rigid and resistant hair shaft through their extensive disulfide bond cross-linking with abundant cysteine residues of hair keratins. The matrix proteins include the high-sulfur and high-glycine-tyrosine keratins. This is Keratin-associated protein 19-3 (KRTAP19-3) from Homo sapiens (Human).